We begin with the raw amino-acid sequence, 283 residues long: Nopaline-binding periplasmic protein (283 aa).

An N-terminal signal peptide occupies residues 1–25 (MKFFNLNALAAVVTGVLLAAGPTQA). The cysteines at positions 63 and 70 are disulfide-linked.

It belongs to the bacterial solute-binding protein 3 family.

It is found in the periplasm. Component of the nopaline active transport system probably consisting of four subunits: Q, M, P and T. This system is also capable of transporting octopine provided that catabolic functions are induced with nopaline. The polypeptide is Nopaline-binding periplasmic protein (nocT) (Agrobacterium fabrum (strain C58 / ATCC 33970) (Agrobacterium tumefaciens (strain C58))).